The chain runs to 447 residues: Probable ribosomal RNA small subunit methyltransferase B (447 aa).

S-adenosyl-L-methionine contacts are provided by residues 259-265 (CAAPGGK), Asp-283, Asp-310, and Asp-329. Cys-382 functions as the Nucleophile in the catalytic mechanism.

This sequence belongs to the class I-like SAM-binding methyltransferase superfamily. RsmB/NOP family.

The protein resides in the cytoplasm. It catalyses the reaction cytidine(967) in 16S rRNA + S-adenosyl-L-methionine = 5-methylcytidine(967) in 16S rRNA + S-adenosyl-L-homocysteine + H(+). In terms of biological role, specifically methylates the cytosine at position 967 (m5C967) of 16S rRNA. This is Probable ribosomal RNA small subunit methyltransferase B from Bacillus subtilis (strain 168).